Reading from the N-terminus, the 174-residue chain is Pituitary tumor-transforming gene 1 protein-interacting protein (174 aa).

A signal peptide spans 1 to 29 (MASAVLGLTLRWVMFLSAVLLLLLPGASA). The Extracellular segment spans residues 30-93 (QEPPGVGCSE…RWGVCWVNFE (64 aa)). Residues 36 to 89 (GCSEYTNRSCEECLRNVSCLWCNENKACLDYPVRKILPPASLCKLSSARWGVCW) enclose the PSI domain. 2 N-linked (GlcNAc...) asparagine glycosylation sites follow: asparagine 42 and asparagine 51. Residues 94 to 114 (ALIITMSVLGGSVLLGITVCC) form a helical membrane-spanning segment. Residues 115-174 (CCCCRRKRSRKPDKSDERAMREQEERRVRQEERRAEMKSRHDEIRKKYGLFKEQNPYEKF) lie on the Cytoplasmic side of the membrane. A disordered region spans residues 126 to 155 (PDKSDERAMREQEERRVRQEERRAEMKSRH). Residues 127–163 (DKSDERAMREQEERRVRQEERRAEMKSRHDEIRKKYG) are a coiled coil. Tyrosine 171 carries the post-translational modification Phosphotyrosine.

In terms of assembly, interacts with PTTG1.

It is found in the cell membrane. Its subcellular location is the cytoplasm. The protein resides in the nucleus. May facilitate PTTG1 nuclear translocation. This Rattus norvegicus (Rat) protein is Pituitary tumor-transforming gene 1 protein-interacting protein (Pttg1ip).